Here is a 124-residue protein sequence, read N- to C-terminus: Small ribosomal subunit protein uS13 (124 aa).

Residues 99 to 124 (RGQRTRTNARTRKGPRKTVGVMRKKS) form a disordered region. A compositionally biased stretch (basic residues) spans 101–124 (QRTRTNARTRKGPRKTVGVMRKKS).

Belongs to the universal ribosomal protein uS13 family. In terms of assembly, part of the 30S ribosomal subunit. Forms a loose heterodimer with protein S19. Forms two bridges to the 50S subunit in the 70S ribosome.

Its function is as follows. Located at the top of the head of the 30S subunit, it contacts several helices of the 16S rRNA. In the 70S ribosome it contacts the 23S rRNA (bridge B1a) and protein L5 of the 50S subunit (bridge B1b), connecting the 2 subunits; these bridges are implicated in subunit movement. Contacts the tRNAs in the A and P-sites. This is Small ribosomal subunit protein uS13 from Caldicellulosiruptor saccharolyticus (strain ATCC 43494 / DSM 8903 / Tp8T 6331).